The sequence spans 163 residues: Nucleotide-binding protein NTHI1194 (163 aa).

Belongs to the YajQ family.

Its function is as follows. Nucleotide-binding protein. The polypeptide is Nucleotide-binding protein NTHI1194 (Haemophilus influenzae (strain 86-028NP)).